Reading from the N-terminus, the 245-residue chain is Uridylate kinase (245 aa).

14–17 contacts ATP; the sequence is KLSG. G56 contacts UMP. ATP-binding residues include G57 and R61. UMP-binding positions include D76 and 137 to 144; that span reads TGLPFFTT. ATP contacts are provided by T164, Y170, and D173.

It belongs to the UMP kinase family. In terms of assembly, homohexamer.

The protein localises to the cytoplasm. The enzyme catalyses UMP + ATP = UDP + ADP. It participates in pyrimidine metabolism; CTP biosynthesis via de novo pathway; UDP from UMP (UMPK route): step 1/1. Its activity is regulated as follows. Inhibited by UTP. Its function is as follows. Catalyzes the reversible phosphorylation of UMP to UDP. This chain is Uridylate kinase, found in Syntrophobacter fumaroxidans (strain DSM 10017 / MPOB).